A 366-amino-acid chain; its full sequence is Purple acid phosphatase 3 (366 aa).

Residues 1-32 (MTYIYRDTKITTKSTIPFLIFFLFCFSNLSMA) form the signal peptide. Residue aspartate 81 coordinates Fe cation. N-linked (GlcNAc...) asparagine glycosylation is present at asparagine 89. Fe cation contacts are provided by aspartate 114 and tyrosine 117. Residue aspartate 114 participates in Zn(2+) binding. The Zn(2+) site is built by asparagine 152 and histidine 246. The active-site Proton donor is the histidine 255. Histidine 281 contacts Zn(2+). 281–283 (HDH) contacts substrate. Histidine 283 is a Fe cation binding site.

It belongs to the metallophosphoesterase superfamily. Purple acid phosphatase family. Homodimer. The cofactor is Fe cation. Requires Zn(2+) as cofactor. As to expression, expressed in stems, leaves, flowers and siliques.

It localises to the secreted. The catalysed reaction is a phosphate monoester + H2O = an alcohol + phosphate. In Arabidopsis thaliana (Mouse-ear cress), this protein is Purple acid phosphatase 3 (PAP3).